A 146-amino-acid polypeptide reads, in one-letter code: Phospholipase A2, membrane associated (146 aa).

Positions 1–21 (MKVLLLLAASIMAFGSIQVQG) are cleaved as a signal peptide. Disulfide bonds link Cys-47/Cys-139, Cys-49/Cys-65, Cys-64/Cys-119, Cys-70/Cys-146, Cys-71/Cys-112, Cys-80/Cys-105, and Cys-98/Cys-110. Ca(2+)-binding residues include His-48, Gly-50, and Gly-52. The active site involves His-68. Asp-69 serves as a coordination point for Ca(2+). Residue Asp-113 is part of the active site.

This sequence belongs to the phospholipase A2 family. Ca(2+) is required as a cofactor. Mainly in the Paneth cells adjacent to the stem population in the small intestines.

Its subcellular location is the secreted. It is found in the cell membrane. The protein localises to the mitochondrion outer membrane. The catalysed reaction is a 1,2-diacyl-sn-glycero-3-phosphoethanolamine + H2O = a 1-acyl-sn-glycero-3-phosphoethanolamine + a fatty acid + H(+). It catalyses the reaction 1-hexadecanoyl-2-(9Z-octadecenoyl)-sn-glycero-3-phosphoethanolamine + H2O = 1-hexadecanoyl-sn-glycero-3-phosphoethanolamine + (9Z)-octadecenoate + H(+). It carries out the reaction 1-hexadecanoyl-2-(9Z,12Z-octadecadienoyl)-sn-glycero-3-phosphoethanolamine + H2O = 1-hexadecanoyl-sn-glycero-3-phosphoethanolamine + (9Z,12Z)-octadecadienoate + H(+). The enzyme catalyses 1-hexadecanoyl-2-(5Z,8Z,11Z,14Z-eicosatetraenoyl)-sn-glycero-3-phosphoethanolamine + H2O = 1-hexadecanoyl-sn-glycero-3-phosphoethanolamine + (5Z,8Z,11Z,14Z)-eicosatetraenoate + H(+). The catalysed reaction is N-hexadecanoyl-1,2-di-(9Z-octadecenoyl)-sn-glycero-3-phosphoethanolamine + H2O = N-hexadecanoyl-1-(9Z-octadecenoyl)-sn-glycero-3-phosphoethanolamine + (9Z)-octadecenoate + H(+). It catalyses the reaction 1,2-dihexadecanoyl-sn-glycero-3-phospho-(1'-sn-glycerol) + H2O = 1-hexadecanoyl-sn-glycero-3-phospho-(1'-sn-glycerol) + hexadecanoate + H(+). It carries out the reaction 1-hexadecanoyl-2-(9Z-octadecenoyl)-sn-glycero-3-phosphoglycerol + H2O = 1-hexadecanoyl-sn-glycero-3-phosphoglycerol + (9Z)-octadecenoate + H(+). The enzyme catalyses 1-hexadecanoyl-2-(9Z-octadecenoyl)-sn-glycero-3-phospho-(1'-sn-glycerol) + H2O = 1-hexadecanoyl-sn-glycero-3-phospho-(1'-sn-glycerol) + (9Z)-octadecenoate + H(+). The catalysed reaction is a 1,2-diacyl-sn-glycero-3-phosphocholine + H2O = a 1-acyl-sn-glycero-3-phosphocholine + a fatty acid + H(+). It catalyses the reaction 1,2-dihexadecanoyl-sn-glycero-3-phosphocholine + H2O = 1-hexadecanoyl-sn-glycero-3-phosphocholine + hexadecanoate + H(+). It carries out the reaction 1-hexadecanoyl-2-(9Z-octadecenoyl)-sn-glycero-3-phosphocholine + H2O = 1-hexadecanoyl-sn-glycero-3-phosphocholine + (9Z)-octadecenoate + H(+). The enzyme catalyses 1-hexadecanoyl-2-(9Z,12Z-octadecadienoyl)-sn-glycero-3-phosphocholine + H2O = (9Z,12Z)-octadecadienoate + 1-hexadecanoyl-sn-glycero-3-phosphocholine + H(+). The catalysed reaction is 1-hexadecanoyl-2-(4Z,7Z,10Z,13Z,16Z,19Z-docosahexaenoyl)-sn-glycero-3-phosphocholine + H2O = (4Z,7Z,10Z,13Z,16Z,19Z)-docosahexaenoate + 1-hexadecanoyl-sn-glycero-3-phosphocholine + H(+). Secretory calcium-dependent phospholipase A2 that primarily targets extracellular phospholipids with implications in host antimicrobial defense, inflammatory response and tissue regeneration. Hydrolyzes the ester bond of the fatty acyl group attached at sn-2 position of phospholipids (phospholipase A2 activity) with preference for phosphatidylethanolamines and phosphatidylglycerols over phosphatidylcholines. Contributes to lipid remodeling of cellular membranes and generation of lipid mediators involved in pathogen clearance. Displays bactericidal activity against Gram-positive bacteria by directly hydrolyzing phospholipids of the bacterial membrane. Upon sterile inflammation, targets membrane phospholipids of extracellular mitochondria released from activated platelets, generating free unsaturated fatty acids such as arachidonate that is used by neighboring leukocytes to synthesize inflammatory eicosanoids such as leukotrienes. Simultaneously, by compromising mitochondrial membrane integrity, promotes the release in circulation of potent damage-associated molecular pattern molecules that activate the innate immune response. Plays a stem cell regulator role in the intestinal crypt. Within intracellular compartment mediates Paneth cell differentiation and its stem cell supporting functions by inhibiting Wnt signaling pathway in intestinal stem cell (ICS). Secreted in the intestinal lumen upon inflammation, acts in an autocrine way and promotes prostaglandin E2 synthesis that stimulates Wnt signaling pathway in ICS cells and tissue regeneration. May play a role in the biosynthesis of N-acyl ethanolamines that regulate energy metabolism and inflammation. Hydrolyzes N-acyl phosphatidylethanolamines to N-acyl lysophosphatidylethanolamines, which are further cleaved by a lysophospholipase D to release N-acyl ethanolamines. Independent of its catalytic activity, acts as a ligand for integrins. Binds to and activates integrins ITGAV:ITGB3, ITGA4:ITGB1 and ITGA5:ITGB1. Binds to a site (site 2) which is distinct from the classical ligand-binding site (site 1) and induces integrin conformational changes and enhanced ligand binding to site 1. Induces cell proliferation in an integrin-dependent manner. The sequence is that of Phospholipase A2, membrane associated (Pla2g2a) from Mus musculus (Mouse).